Reading from the N-terminus, the 385-residue chain is Elsinochromes biosynthesis cluster protein HP2 (385 aa).

Residues M1–D22 form the signal peptide. The next 2 helical transmembrane spans lie at T94 to D114 and F148 to W168. The N-linked (GlcNAc...) asparagine glycan is linked to N187. The chain crosses the membrane as a helical span at residues S209 to F229. N-linked (GlcNAc...) asparagine glycosylation occurs at N248. The next 2 helical transmembrane spans lie at A309–A329 and Y344–F364.

It is found in the membrane. Its function is as follows. Part of the gene cluster that mediates the biosynthesis of elsinochromes, pigments consisting of at least four interconvertible tautomers (A, B, C and D) that have a core phenolic quinone to which various side chains are attached and which play an important role in fungal pathogenesis. The non-reducing polyketide synthase PKS1 was proposed to iteratively catalyze decarboxylation between acetyl-CoA and malonyl-CoA subunits for polyketide chain elongation. The released polyketide undergoes cyclization to form an aromatic ring, and proceeds via serial modification steps to produce the heptaketide back- bone of elsinochrome. As elsinochrome has a symmetrical structure, two identical heptaketides are fused to form a core 1,2-dihydrobenzo-perylene ring structure, which can then be successively modified to produce the various derivatives of elsinochrome. Some of these reactions may be cooperatively carried out, at least in part, by the products of RDT1, OXR1 and PKS1. PRF1, embedded within the elsinochrome cluster possibly functions to stabilize some of the biosynthetic enzymes required for elsinochrome production. As prefoldin is a hexamer containing 2 a and 4 b subunits, additional prefoldin subunits, whose coding genes may not immediately link to the elsinochrome biosynthetic gene cluster, are required to fulfill the chaperone function. In addition, no methyltransferase-coding gene exists within the biosynthetic gene cluster, even though elsinochrome has four methyl groups at positions C3, C7, C8 and C12. Apparently, the identified gene cluster does not contain the entire entourage of genes responsible for elsinochrome biosynthesis. Once elsinochrome is synthesized, it must be exported outside the fungal cells, which is probably accomplished by the ECT1 transporter, to avoid toxicity. This Elsinoe fawcettii (Citrus scab fungus) protein is Elsinochromes biosynthesis cluster protein HP2.